We begin with the raw amino-acid sequence, 558 residues long: MPAKKTMAQRLGQALETMTRQCGQLPETPAYGSWLLGRVSESPSRRWVRIKRIVTVYIMTANLTGIVVALLVVTFAFPVPSIYTDAPWWVTFGVAPAYATLALAIGTYWITTRIVRASIRWAIEERAPSQADGRNTLLLPFRVAAVHLILWDIGGALLATLYGLANRVFVTIILFSVTICGVLVATNCYLFTEFALRPVAAKALEAGRPPRRFAPGIMGRTMTVWSLGSGVPVTGIATTALYVLLVHNLTETQLASAVLILSITTLIFGFLVMWILAWLTAAPVRVVRAALKRVEQGDLRGDLVVFDGTELGELQRGFNAMVNGLRERERVRDLFGRHVGREVAAAAERERPQLGGEDRHAAVVFVDIVGSTQLVDNQPAAHVVKLLNRFFAIVVNEVDRHHGLINKFAGDAALAIFGAPNRLDRPEDAALAAARAIADRLANEMPEVQAGIGVAAGQIVAGNVGAKQRFEYTVVGKPVNQAARLCELAKSHPARLLASSDTLHAASETERAHWSLGETVTLRGYHQPTQLASPHRRPPGSIHLTAEHAEEIRTDRLG.

Helical transmembrane passes span Leu-63 to Tyr-83, Val-90 to Ile-110, Val-143 to Gly-163, Val-168 to Cys-188, Ser-226 to Val-246, and Val-258 to Trp-278. The HAMP domain occupies Leu-279 to Arg-330. In terms of domain architecture, Guanylate cyclase spans Ala-362 to Cys-486. The interval Thr-529–Gly-558 is disordered. Positions Thr-545–Gly-558 are enriched in basic and acidic residues.

The protein belongs to the adenylyl cyclase class-3 family.

The protein resides in the cell membrane. This is an uncharacterized protein from Mycobacterium tuberculosis (strain CDC 1551 / Oshkosh).